An 879-amino-acid polypeptide reads, in one-letter code: Pyruvate dehydrogenase phosphatase regulatory subunit, mitochondrial (879 aa).

The transit peptide at 1–27 directs the protein to the mitochondrion; sequence MMFYRLLSIVGRQRASPGWQNWSSARN.

The protein belongs to the GcvT family. Heterodimer of a catalytic (PDP1) and a regulatory (PDPR) subunit.

It localises to the mitochondrion matrix. Decreases the sensitivity of PDP1 to magnesium ions, and this inhibition is reversed by the polyamine spermine. This Homo sapiens (Human) protein is Pyruvate dehydrogenase phosphatase regulatory subunit, mitochondrial (PDPR).